Here is a 968-residue protein sequence, read N- to C-terminus: Chaperone protein ClpB3, chloroplastic (968 aa).

The transit peptide at 1 to 67 (MATATTTATA…RLDHRPFVVR (67 aa)) directs the protein to the chloroplast. A Clp R domain is found at 78 to 222 (TQQEFTEMAW…KSAIESIRGK (145 aa)). Repeat stretches follow at residues 82 to 147 (FTEM…IQRQ) and 159 to 222 (LGRD…IRGK). An i region spans residues 237–485 (LEKYGKDLTA…KLKMEITSKP (249 aa)). 282–289 (GEPGVGKT) serves as a coordination point for ATP. The stretch at 488-606 (LDELDRSVIK…NEYLSSGKSM (119 aa)) forms a coiled coil. The tract at residues 611-802 (VLGSDIAEIV…VIIMTSNVGS (192 aa)) is II. 685 to 692 (GPTGVGKT) provides a ligand contact to ATP.

This sequence belongs to the ClpA/ClpB family.

Its subcellular location is the plastid. The protein localises to the chloroplast. Molecular chaperone essential for chloroplast development and seedling viability. Mediates internal thylakoid membrane formation and confers thermotolerance to chloroplasts during heat stress. This chain is Chaperone protein ClpB3, chloroplastic (CLPB3), found in Arabidopsis thaliana (Mouse-ear cress).